A 306-amino-acid polypeptide reads, in one-letter code: Homoserine kinase (306 aa).

84-94 (PAGLGLGSSGA) is an ATP binding site.

The protein belongs to the GHMP kinase family. Homoserine kinase subfamily.

Its subcellular location is the cytoplasm. The enzyme catalyses L-homoserine + ATP = O-phospho-L-homoserine + ADP + H(+). Its pathway is amino-acid biosynthesis; L-threonine biosynthesis; L-threonine from L-aspartate: step 4/5. In terms of biological role, catalyzes the ATP-dependent phosphorylation of L-homoserine to L-homoserine phosphate. The chain is Homoserine kinase from Sulfolobus acidocaldarius (strain ATCC 33909 / DSM 639 / JCM 8929 / NBRC 15157 / NCIMB 11770).